The primary structure comprises 114 residues: T-cell leukemia/lymphoma protein 1A (114 aa).

This sequence belongs to the TCL1 family. As to quaternary structure, homodimer. Interacts with AKT1, AKT2 and AKT3 (via PH domain). Interacts with PNPT1; the interaction has no effect on PNPT1 exonuclease activity. Restricted in the T-cell lineage to immature thymocytes and activated peripheral lymphocytes. Preferentially expressed early in T- and B-lymphocyte differentiation.

The protein resides in the cytoplasm. It localises to the nucleus. The protein localises to the microsome. It is found in the endoplasmic reticulum. Functionally, enhances the phosphorylation and activation of AKT1, AKT2 and AKT3. Promotes nuclear translocation of AKT1. Enhances cell proliferation, stabilizes mitochondrial membrane potential and promotes cell survival. The sequence is that of T-cell leukemia/lymphoma protein 1A (TCL1A) from Homo sapiens (Human).